Reading from the N-terminus, the 246-residue chain is Small ribosomal subunit protein uS2 (246 aa).

Belongs to the universal ribosomal protein uS2 family.

The sequence is that of Small ribosomal subunit protein uS2 from Dictyoglomus thermophilum (strain ATCC 35947 / DSM 3960 / H-6-12).